We begin with the raw amino-acid sequence, 660 residues long: MTSASKAVELQLQVKHNAEELQDFMRDLEHWEKDMKEKDLELRRQGGVAEENLPPIRNGNFRKKKKKGKAKESSRKTKEENTKNRIKSYDYDAWAKLDVDRILDELDKEDSTHDSLSQESESDEDGIRVDSQKALVLKEKGNKYFKQGKYDEAIECYTKGMDADPYNPVLPTNRASAYFRLKKFAVAESDCNLAIALSRTYTKAYARRGAARFALQKLEDARKDYEKVLELEPDNFEATNELRKINQALTSKENSGPGAAAAAESKPAAGESKPTGGQQGRQKAIAEKDLGNGFFKEGKYEQAIECYTRGIAADRTNALLPANRAMAYLKIQRYEEAERDCTQAIVLDGSYSKAFARRGTARTFLGKINEAKQDFETVLLLEPGNKQAATELSRIKKELIEKGHWDDVFLDSTQRHHVVKAVDNPPRGSPKALKKVFIEETGNLIETVDAPDSSATVPESDRATAAVGTGTKKNPSEGVSLPAGDRPRAKVLKIEAVSDTSAPQAQVGVKQDARQPGSEKASVRAEQMPGQLAAAGLPPVPANSFQLESDFRQLRSSPEMLYQYVKNIEPSLYPKLFQKNLDPDVFNQIIKILHDFYIEREKPALIFEVLERLSQLRRFDMAVMFMSGPERKLTNVLFNHLEKSDLKEDSVEELKKRYGG.

At T2 the chain carries N-acetylthreonine. The stretch at 8–41 is one TPR 1 repeat; the sequence is VELQLQVKHNAEELQDFMRDLEHWEKDMKEKDLE. The segment at 42-83 is disordered; that stretch reads LRRQGGVAEENLPPIRNGNFRKKKKKGKAKESSRKTKEENTK. Over residues 60–69 the composition is skewed to basic residues; sequence NFRKKKKKGK. Residues 70–83 are compositionally biased toward basic and acidic residues; the sequence is AKESSRKTKEENTK. Phosphoserine occurs at positions 88, 117, 120, and 122. Residues 109 to 128 are disordered; the sequence is EDSTHDSLSQESESDEDGIR. TPR repeat units lie at residues 134-167, 169-201, and 202-235; these read ALVL…DPYN, VLPT…SRTY, and TKAY…EPDN. Positions 250–283 are disordered; it reads TSKENSGPGAAAAAESKPAAGESKPTGGQQGRQK. Residues 252–273 are compositionally biased toward low complexity; that stretch reads KENSGPGAAAAAESKPAAGESK. TPR repeat units lie at residues 284–317, 319–351, and 352–385; these read AIAE…DRTN, LLPA…DGSY, and SKAF…EPGN. Positions 449-485 are disordered; it reads DAPDSSATVPESDRATAAVGTGTKKNPSEGVSLPAGD. Residue S476 is modified to Phosphoserine. K493 is covalently cross-linked (Glycyl lysine isopeptide (Lys-Gly) (interchain with G-Cter in SUMO2)).

This sequence belongs to the RPAP3 family. Tightly associated with the RNA polymerase II complex. Component of the R2TP complex composed at least of RUVBL1, RUVBL2, RPAP3 and PIHD1. Component of the PAQosome complex which is responsible for the biogenesis of several protein complexes and which consists of R2TP complex members RUVBL1, RUVBL2, RPAP3 and PIH1D1, URI complex members PFDN2, PFDN6, PDRG1, UXT and URI1 as well as ASDURF, POLR2E and DNAAF10/WDR92. Interacts with PIH1D1. Interacts with TSC1 and TSC2. Interacts with PRPF8 and EFTUD2 in a ZNHIT2-dependent manner.

Functionally, forms an interface between the RNA polymerase II enzyme and chaperone/scaffolding protein, suggesting that it is required to connect RNA polymerase II to regulators of protein complex formation. This is RNA polymerase II-associated protein 3 (Rpap3) from Mus musculus (Mouse).